Here is a 700-residue protein sequence, read N- to C-terminus: DNA ligase 2 (700 aa).

Residues 42–46 and 89–90 each bind NAD(+); these read DDAYD and SL. Lysine 122 serves as the catalytic N6-AMP-lysine intermediate. Positions 143, 177, 303, and 327 each coordinate NAD(+). Residues cysteine 421, cysteine 424, cysteine 437, and cysteine 443 each contribute to the Zn(2+) site. The tract at residues 590-621 is disordered; it reads MTEPGATPPRPADTDGADGATAEAPGDGGPLA. In terms of domain architecture, BRCT spans 615 to 700; the sequence is GDGGPLAGMK…FAVLVAGLLS (86 aa).

Belongs to the NAD-dependent DNA ligase family. LigA subfamily. Mg(2+) is required as a cofactor. The cofactor is Mn(2+).

It catalyses the reaction NAD(+) + (deoxyribonucleotide)n-3'-hydroxyl + 5'-phospho-(deoxyribonucleotide)m = (deoxyribonucleotide)n+m + AMP + beta-nicotinamide D-nucleotide.. DNA ligase that catalyzes the formation of phosphodiester linkages between 5'-phosphoryl and 3'-hydroxyl groups in double-stranded DNA using NAD as a coenzyme and as the energy source for the reaction. It is essential for DNA replication and repair of damaged DNA. The protein is DNA ligase 2 of Streptomyces coelicolor (strain ATCC BAA-471 / A3(2) / M145).